Consider the following 206-residue polypeptide: FMN-dependent NADH:quinone oxidoreductase (206 aa).

FMN is bound by residues 15 to 17, 94 to 97, and 138 to 141; these read SVS, MYNF, and TRGG.

The protein belongs to the azoreductase type 1 family. Homodimer. Requires FMN as cofactor.

It carries out the reaction 2 a quinone + NADH + H(+) = 2 a 1,4-benzosemiquinone + NAD(+). The enzyme catalyses N,N-dimethyl-1,4-phenylenediamine + anthranilate + 2 NAD(+) = 2-(4-dimethylaminophenyl)diazenylbenzoate + 2 NADH + 2 H(+). Its function is as follows. Quinone reductase that provides resistance to thiol-specific stress caused by electrophilic quinones. Functionally, also exhibits azoreductase activity. Catalyzes the reductive cleavage of the azo bond in aromatic azo compounds to the corresponding amines. In Sinorhizobium medicae (strain WSM419) (Ensifer medicae), this protein is FMN-dependent NADH:quinone oxidoreductase.